Consider the following 262-residue polypeptide: Endoplasmic reticulum chaperone BiP (262 aa).

An ATP-binding site is contributed by 8 to 11 (GSTR). Residues 53–63 (QDTGDLVLLDV) are interdomain linker. Residues 64–144 (CPLTLGIETV…PRGVPQIEVT (81 aa)) form a substrate-binding (SBD) region. Position 91 is an N6-succinyllysine (K91). Residue R136 is modified to Omega-N-methylarginine. T162 bears the O-AMP-threonine; alternate mark. The residue at position 162 (T162) is a Phosphothreonine; alternate. At K229 the chain carries N6,N6,N6-trimethyllysine; by METTL21A; in vitro. Position 229 is an N6,N6-dimethyllysine; alternate (K229). K229 carries the post-translational modification N6-methyllysine; alternate. K235 is modified (N6-methyllysine).

This sequence belongs to the heat shock protein 70 family. Monomer and homooligomer; homooligomerization via the interdomain linker inactivates the chaperone activity and acts as a storage of HSPA5/BiP molecules. Interacts with DNAJC1 (via J domain). Component of an EIF2 complex at least composed of CELF1/CUGBP1, CALR, CALR3, EIF2S1, EIF2S2, HSP90B1 and HSPA5. Part of a large chaperone multiprotein complex comprising DNAJB11, HSP90B1, HSPA5, HYOU, PDIA2, PDIA4, PDIA6, PPIB, SDF2L1, UGGT1 and very small amounts of ERP29, but not, or at very low levels, CALR nor CANX. Interacts with TMEM132A and TRIM21. May form a complex with ERLEC1, OS9, SEL1L and SYVN1. Interacts with DNAJC10. Interacts with DNAJB9/ERdj4; leading to recruit HSPA5/BiP to ERN1/IRE1. Interacts with ERN1/IRE1 (via luminal domain); the interaction takes place following interaction with DNAJB9/ERdj4 and leads to inactivate ERN1/IRE1, the interaction also competitively inhibits ERN1 interaction with MANF. Interacts directly with MANF (via SAP domain); the interaction inhibits ATP binding to HSPA5/BiP and subsequent nucleotide exchange. Interacts with EIF2AK3/PERK (via luminal domain); interaction leads to inactivate EIF2AK3/PERK. Interacts with MX1. Interacts with METTL23. Interacts with CEMIP; the interaction induces calcium leakage from the endoplasmic reticulum and cell migration. Interacts with PCSK4 form; the interaction takes place in the endoplasmic reticulum. Interacts with CIPC. Interacts with CCDC88B (via C-terminus); the interaction opposes ERN1-mediated JNK activation, protecting against apoptosis. Interacts with INPP5K; necessary for INPP5K localization at the endoplasmic reticulum. Interacts with MANF; the interaction is direct. Interacts with LOXL2; leading to activate the ERN1/IRE1-XBP1 pathway of the unfolded protein response. Interacts with CLU under stressed condition; interaction increases CLU protein stability; facilitates its retrotranslocation and redistribution to the mitochondria; cooperatively suppress stress-induced apoptosis by stabilizing mitochondrial membrane integrity. Interacts with CCDC47. Interacts with CLN3. Interacts with ELAPOR1; may regulate the function of HSPA5 in apoptosis and cell proliferation. Interacts with CASP7. Interacts with ILDR2; the interaction stabilizes ILDR2 expression. Interacts with ADAM7. In terms of processing, in unstressed cells, AMPylation at Thr-162 by FICD inactivates the chaperome activity: AMPylated form is locked in a relatively inert state and only weakly stimulated by J domain-containing proteins. In response to endoplasmic reticulum stress, de-AMPylation by the same protein, FICD, restores the chaperone activity.

The protein resides in the endoplasmic reticulum lumen. It localises to the melanosome. Its subcellular location is the cytoplasm. The protein localises to the cell surface. The enzyme catalyses ATP + H2O = ADP + phosphate + H(+). With respect to regulation, the chaperone activity is regulated by ATP-induced allosteric coupling of the nucleotide-binding (NBD) and substrate-binding (SBD) domains. In the ADP-bound and nucleotide-free (apo) states, the two domains have little interaction. In contrast, in the ATP-bound state the two domains are tightly coupled, which results in drastically accelerated kinetics in both binding and release of polypeptide substrates. J domain-containing co-chaperones (DNAJB9/ERdj4 or DNAJC10/ERdj5) stimulate the ATPase activity and are required for efficient substrate recognition by HSPA5/BiP. Homooligomerization inactivates participating HSPA5/BiP protomers and probably act as reservoirs to store HSPA5/BiP molecules when they are not needed by the cell. In terms of biological role, endoplasmic reticulum chaperone that plays a key role in protein folding and quality control in the endoplasmic reticulum lumen. Involved in the correct folding of proteins and degradation of misfolded proteins via its interaction with DNAJC10/ERdj5, probably to facilitate the release of DNAJC10/ERdj5 from its substrate. Acts as a key repressor of the EIF2AK3/PERK and ERN1/IRE1-mediated unfolded protein response (UPR). In the unstressed endoplasmic reticulum, recruited by DNAJB9/ERdj4 to the luminal region of ERN1/IRE1, leading to disrupt the dimerization of ERN1/IRE1, thereby inactivating ERN1/IRE1. Also binds and inactivates EIF2AK3/PERK in unstressed cells. Accumulation of misfolded protein in the endoplasmic reticulum causes release of HSPA5/BiP from ERN1/IRE1 and EIF2AK3/PERK, allowing their homodimerization and subsequent activation. Plays an auxiliary role in post-translational transport of small presecretory proteins across endoplasmic reticulum (ER). May function as an allosteric modulator for SEC61 channel-forming translocon complex, likely cooperating with SEC62 to enable the productive insertion of these precursors into SEC61 channel. Appears to specifically regulate translocation of precursors having inhibitory residues in their mature region that weaken channel gating. May also play a role in apoptosis and cell proliferation. This Sus scrofa (Pig) protein is Endoplasmic reticulum chaperone BiP.